Here is a 266-residue protein sequence, read N- to C-terminus: Glucose 1-dehydrogenase (266 aa).

An NADP(+)-binding site is contributed by 15-39 (LVTGASQGIGEATALRFAEEGAQVA). S149 is a substrate binding site. Residue Y162 is the Proton acceptor of the active site.

This sequence belongs to the short-chain dehydrogenases/reductases (SDR) family. In terms of assembly, homotetramer or homooctamer.

The catalysed reaction is D-glucose + NADP(+) = D-glucono-1,5-lactone + NADPH + H(+). Oxidizes both D-glucose and D-mannose, but is 15 times more catalytically efficient with mannose. Strictly dependent on NADP. In Gluconobacter oxydans (strain 621H) (Gluconobacter suboxydans), this protein is Glucose 1-dehydrogenase.